Consider the following 149-residue polypeptide: 3-dehydroquinate dehydratase (149 aa).

The Proton acceptor role is filled by Y26. Substrate contacts are provided by N78, H84, and D91. The active-site Proton donor is H104. Substrate contacts are provided by residues 105–106 (IS) and R115.

Belongs to the type-II 3-dehydroquinase family. As to quaternary structure, homododecamer.

The catalysed reaction is 3-dehydroquinate = 3-dehydroshikimate + H2O. Its pathway is metabolic intermediate biosynthesis; chorismate biosynthesis; chorismate from D-erythrose 4-phosphate and phosphoenolpyruvate: step 3/7. Functionally, catalyzes a trans-dehydration via an enolate intermediate. The chain is 3-dehydroquinate dehydratase (aroQ) from Buchnera aphidicola subsp. Schizaphis graminum (strain Sg).